The sequence spans 113 residues: Death-associated protein-like 1.S (113 aa).

A disordered region spans residues 1–53 (MTKELKVQSSPQALKAGHLPAVKAGGMRVSKKQGNDENSAPEKNAKKTLQEKP).

This sequence belongs to the DAP-DAPL1 family. Associates with ribosomes; preventing translation. Interacts with eiF5a (eif5a and eif5a2); preventing translation.

Its function is as follows. Ribosome-binding protein that promotes ribosome hibernation, a process during which ribosomes are stabilized in an inactive state and preserved from proteasomal degradation. Acts via its association with eiF5a (eif5a and eif5a2) at the polypeptide exit tunnel of the ribosome, preventing mRNA translation. Plays a key role in ribosome hibernation in the mature egg by preventing mRNA translation, leading to ribosome inactivation. Ribosomes, which are produced in large quantities during oogenesis, are stored and translationally repressed in the egg and early embryo. The polypeptide is Death-associated protein-like 1.S (dapl1.S) (Xenopus laevis (African clawed frog)).